We begin with the raw amino-acid sequence, 150 residues long: Transcriptional repressor NrdR (150 aa).

A zinc finger spans residues 3–34 (CPFCHHPQSRVIDSRTVENGFVTRRRRQCTKC). The region spanning 46-136 (LLVEKRNGVT…VYKSFSSMED (91 aa)) is the ATP-cone domain.

It belongs to the NrdR family. Zn(2+) is required as a cofactor.

In terms of biological role, negatively regulates transcription of bacterial ribonucleotide reductase nrd genes and operons by binding to NrdR-boxes. This Corynebacterium kroppenstedtii (strain DSM 44385 / JCM 11950 / CIP 105744 / CCUG 35717) protein is Transcriptional repressor NrdR.